An 836-amino-acid polypeptide reads, in one-letter code: Exonuclease 1 (836 aa).

The interval 1-99 (MGIQGLLPQL…TKRERSRKEN (99 aa)) is N-domain. Asp-30 and Asp-78 together coordinate Mg(2+). The tract at residues 82 to 108 (LPMKGDQETKRERSRKENLERAKEHES) is disordered. The span at 84–108 (MKGDQETKRERSRKENLERAKEHES) shows a compositional bias: basic and acidic residues. The I-domain stretch occupies residues 138 to 230 (KQEKVDYIVA…ILSGCDYLPS (93 aa)). Residues Glu-150, Asp-152, Asp-171, Asp-173, and Asp-226 each coordinate Mg(2+). Disordered regions lie at residues 464 to 488 (RDDS…DPDI), 568 to 641 (EDEC…TNSE), and 744 to 836 (TASA…TSRS). Positions 568–577 (EDECHDEDNC) are enriched in acidic residues. Composition is skewed to polar residues over residues 578 to 592 (ETGN…QRSS) and 744 to 758 (TASA…TSKA).

Belongs to the XPG/RAD2 endonuclease family. EXO1 subfamily. The cofactor is Mg(2+).

The protein resides in the nucleus. Functionally, putative 5'-&gt;3' double-stranded DNA exonuclease which may also contain a cryptic 3'-&gt;5' double-stranded DNA exonuclease activity. May be involved in DNA mismatch repair (MMR). This chain is Exonuclease 1 (EXO1), found in Oryza sativa subsp. japonica (Rice).